A 300-amino-acid chain; its full sequence is GTPase Era (300 aa).

The Era-type G domain maps to 8 to 176 (RCGYVAIVGR…EGLIAKHLPE (169 aa)). The interval 16-23 (GRPNVGKS) is G1. A GTP-binding site is contributed by 16 to 23 (GRPNVGKS). Residues 42–46 (QTTRH) are G2. A G3 region spans residues 63 to 66 (DTPG). GTP contacts are provided by residues 63–67 (DTPGM) and 125–128 (NKTD). Residues 125–128 (NKTD) are G4. Positions 155–157 (VSA) are G5. Positions 199–283 (VREKIMRQLG…MLNLWVKVKG (85 aa)) constitute a KH type-2 domain.

The protein belongs to the TRAFAC class TrmE-Era-EngA-EngB-Septin-like GTPase superfamily. Era GTPase family. As to quaternary structure, monomer.

The protein resides in the cytoplasm. Its subcellular location is the cell inner membrane. In terms of biological role, an essential GTPase that binds both GDP and GTP, with rapid nucleotide exchange. Plays a role in 16S rRNA processing and 30S ribosomal subunit biogenesis and possibly also in cell cycle regulation and energy metabolism. The polypeptide is GTPase Era (Pseudomonas fluorescens (strain ATCC BAA-477 / NRRL B-23932 / Pf-5)).